Consider the following 199-residue polypeptide: Holliday junction branch migration complex subunit RuvA (199 aa).

The domain I stretch occupies residues 1 to 63; sequence MIGCLIGEVF…EDAQQLYGFS (63 aa). The tract at residues 64–142 is domain II; that stretch reads DAQEKTIFRT…TLAQGTSSAA (79 aa). Residues 143–150 are flexible linker; sequence ALPQIQFV. The tract at residues 150–199 is domain III; sequence VSNSPVAEAEAALQSLGYKPLEAQKAVAAVKADYTESADIIRAALKSMMK.

The protein belongs to the RuvA family. As to quaternary structure, homotetramer. Forms an RuvA(8)-RuvB(12)-Holliday junction (HJ) complex. HJ DNA is sandwiched between 2 RuvA tetramers; dsDNA enters through RuvA and exits via RuvB. An RuvB hexamer assembles on each DNA strand where it exits the tetramer. Each RuvB hexamer is contacted by two RuvA subunits (via domain III) on 2 adjacent RuvB subunits; this complex drives branch migration. In the full resolvosome a probable DNA-RuvA(4)-RuvB(12)-RuvC(2) complex forms which resolves the HJ.

It localises to the cytoplasm. Its function is as follows. The RuvA-RuvB-RuvC complex processes Holliday junction (HJ) DNA during genetic recombination and DNA repair, while the RuvA-RuvB complex plays an important role in the rescue of blocked DNA replication forks via replication fork reversal (RFR). RuvA specifically binds to HJ cruciform DNA, conferring on it an open structure. The RuvB hexamer acts as an ATP-dependent pump, pulling dsDNA into and through the RuvAB complex. HJ branch migration allows RuvC to scan DNA until it finds its consensus sequence, where it cleaves and resolves the cruciform DNA. This is Holliday junction branch migration complex subunit RuvA from Acinetobacter baumannii (strain AB307-0294).